Reading from the N-terminus, the 660-residue chain is ATPase-like fidgetin (660 aa).

Disordered stretches follow at residues 141 to 186 (KQIY…EDPF) and 209 to 334 (ALSS…ADSK). The span at 145-161 (SKHSPPSTSTSSIVSSS) shows a compositional bias: low complexity. S177 carries the phosphoserine modification. Residues 213 to 239 (DTGRSATMNSTTFPTAMKSQSTTKPTL) are compositionally biased toward polar residues. Residues 240-255 (SNSVSSPSIQVSNNQN) show a composition bias toward low complexity. A compositionally biased stretch (polar residues) spans 301-313 (LNSSHDTLGSSTR). Residues 314–333 (PSSADTAGSPATSPPATADS) are compositionally biased toward low complexity. 419-426 (GPPGTGKT) contributes to the ATP binding site.

The protein belongs to the AAA ATPase family.

It is found in the nucleus. In Schizosaccharomyces pombe (strain 972 / ATCC 24843) (Fission yeast), this protein is ATPase-like fidgetin (alf1).